A 226-amino-acid chain; its full sequence is PKHD-type hydroxylase mma_3620 (226 aa).

One can recognise a Fe2OG dioxygenase domain in the interval 78–178 (RYMPPLFNRY…RVCSFFWLQS (101 aa)). Residues histidine 96, aspartate 98, and histidine 159 each coordinate Fe cation. Arginine 169 contacts 2-oxoglutarate.

Fe(2+) is required as a cofactor. L-ascorbate serves as cofactor.

The polypeptide is PKHD-type hydroxylase mma_3620 (Janthinobacterium sp. (strain Marseille) (Minibacterium massiliensis)).